The following is a 172-amino-acid chain: ATP-dependent kinase-like protein notR' (172 aa).

Belongs to the YFH7 family.

ATP-dependent kinase-like protein; part of the gene cluster that mediates the biosynthesis of notoamide, a fungal indole alkaloid that belongs to a family of natural products containing a characteristic bicyclo[2.2.2]diazaoctane core. The first step of notoamide biosynthesis involves coupling of L-proline and L-tryptophan by the bimodular NRPS notE', to produce cyclo-L-tryptophan-L-proline called brevianamide F. The reverse prenyltransferase notF' then acts as a deoxybrevianamide E synthase and converts brevianamide F to deoxybrevianamide E via reverse prenylation at C-2 of the indole ring leading to the bicyclo[2.2.2]diazaoctane core. Deoxybrevianamide E is further hydroxylated at C-6 of the indole ring, likely catalyzed by the cytochrome P450 monooxygenase notG', to yield 6-hydroxy-deoxybrevianamide E. 6-hydroxy-deoxybrevianamide E is a specific substrate of the prenyltransferase notC' for normal prenylation at C-7 to produce 6-hydroxy-7-prenyl-deoxybrevianamide, also called notoamide S. As the proposed pivotal branching point in notoamide biosynthesis, notoamide S can be diverted to notoamide E through an oxidative pyran ring closure putatively catalyzed by either notH' cytochrome P450 monooxygenase or the notD' FAD-linked oxidoreductase. This step would be followed by an indole 2,3-epoxidation-initiated pinacol-like rearrangement catalyzed by the notB' FAD-dependent monooxygenase leading to the formation of notoamide C and notoamide D. On the other hand notoamide S is converted to notoamide T by notH' (or notD'), a bifunctional oxidase that also functions as the intramolecular Diels-Alderase responsible for generation of (-)-notoamide T. To generate antipodal (+)-notoaminide T, notH (or notD) in Aspergillus strain MF297-2 is expected to catalyze a Diels-Alder reaction leading to the opposite stereochemistry. The remaining oxidoreductase notD' (or notH') likely catalyzes the oxidative pyran ring formation to yield (-)-stephacidin A. The FAD-dependent monooxygenase notI' is highly similar to notB' and is predicted to catalyze a similar conversion from (-)-stephacidin A to (+)-notoamide B via the 2,3-epoxidation of (-)-stephacidin A followed by a pinacol-type rearrangement. Finally, it remains unclear which enzyme could be responsible for the final hydroxylation steps leading to notoamide A and sclerotiamide. The function of notQ' in the notoamide biosynthesis has not been determined yet. The sequence is that of ATP-dependent kinase-like protein notR' from Aspergillus versicolor.